The sequence spans 648 residues: Rab11 family-interacting protein 1 (648 aa).

One can recognise a C2 domain in the interval 1 to 129; that stretch reads MSLAASAGRG…DQSRRKKQWY (129 aa). Positions 164–188 are enriched in basic and acidic residues; that stretch reads SMKDKSRNPFGKLKDKIKGKNKDNT. 3 disordered regions span residues 164-470, 483-503, and 516-555; these read SMKD…GRKG, VRRP…SQNP, and VESK…PKIT. Residues 189 to 201 are compositionally biased toward polar residues; it reads SDTASAIVPSTTP. A phosphoserine mark is found at S205, S209, and S237. 2 stretches are compositionally biased toward polar residues: residues 227–242 and 271–296; these read PSLQ…SVLP and SSAS…SNFS. S304, S319, S343, S345, S347, S349, S360, S361, and S386 each carry phosphoserine. The span at 314–323 shows a compositional bias: polar residues; it reads DSLSRSNVCI. Basic and acidic residues-rich tracts occupy residues 381-394 and 422-436; these read SDRR…KDSM and ATKE…ESKK. S438 is modified (phosphoserine). A compositionally biased stretch (basic and acidic residues) spans 445–454; that stretch reads GKKDVAKGSE. The region spanning 576-638 is the FIP-RBD domain; it reads KKYQPSDPAF…EETPNILRVP (63 aa). Residues 584 to 648 are necessary for interaction with RAB4A and RAB11A, subcellular location and endosomal recycling; sequence AFAYAQLTHD…AQTGKKAGKM (65 aa).

As to quaternary structure, homooligomer. Interacts with RAB11A, RAB11B, RAB25, RAB4A and RAB14.

The protein localises to the recycling endosome. The protein resides in the cytoplasmic vesicle. Its function is as follows. A Rab11 effector protein involved in the endosomal recycling process. Also involved in controlling membrane trafficking along the phagocytic pathway and in phagocytosis. Interaction with RAB14 may function in the process of neurite formation. This Rattus norvegicus (Rat) protein is Rab11 family-interacting protein 1.